Here is a 2320-residue protein sequence, read N- to C-terminus: Sperm-associated antigen 17 (2320 aa).

2 stretches are compositionally biased toward basic and acidic residues: residues Asp-139–Val-171 and Arg-199–Ile-210. Disordered stretches follow at residues Asp-139–Asp-211, Ile-388–Tyr-407, Ala-682–Gln-739, Ser-894–Lys-928, Glu-950–Leu-1001, Lys-1084–Lys-1118, Gln-1191–Asn-1221, Ser-1334–Thr-1367, Asp-1393–Pro-1416, Lys-1983–Val-2028, and Thr-2080–Asp-2101. A compositionally biased stretch (polar residues) spans Val-703–Gln-720. The stretch at Glu-865–Asp-965 forms a coiled coil. Composition is skewed to basic and acidic residues over residues Glu-914–Lys-928 and Glu-950–Lys-999. Over residues Asn-1090–Glu-1103 the composition is skewed to acidic residues. Basic and acidic residues-rich tracts occupy residues Val-1104–Lys-1118 and Lys-1203–Asn-1221. Composition is skewed to polar residues over residues Val-2012–Val-2028 and Glu-2082–Arg-2094.

In terms of assembly, interacts (via the C-terminus) with SPAG6; the interaction probably occurs on polymerized microtubules. In terms of tissue distribution, highly expressed in testis, round spermatids, testicular sperm, epididymal sperm and in condensing spermatids (at protein level). Expressed in organs that contain cilia-bearing cells including brain, oviduct, lung, and uterus. Expressed in articular cartilage and bone.

It is found in the cytoplasm. The protein localises to the cytoskeleton. It localises to the flagellum axoneme. Its subcellular location is the cytoplasmic vesicle. The protein resides in the secretory vesicle. It is found in the acrosome. The protein localises to the golgi apparatus. Its function is as follows. Component of the central pair apparatus of ciliary axonemes. Plays a critical role in the function and structure of motile cilia. May play a role in endochondral bone formation, most likely because of a function in primary cilia of chondrocytes and osteoblasts. Essential for normal spermatogenesis and male fertility. Required for normal manchette structure, transport of proteins along the manchette microtubules and formation of the sperm head and flagellum. Essential for sperm flagellum development and proper assembly of the respiratory motile cilia central pair apparatus, but not the brain ependymal cilia. The polypeptide is Sperm-associated antigen 17 (Spag17) (Mus musculus (Mouse)).